Consider the following 345-residue polypeptide: MRVADFSFDLPDELIARYPMAQRNASRLLTLDGNSGALGDKQFTDLLGMINPGDLMVFNNTRVIPARMFGQKASGGKLEILVERMLDDKRILAHVRSSKSPKVDSLILLDGGYQMKMVARHDTLFELELLSELTILEVLEAVGHMPLPPYIDRPDEDADKERYQTVYNQNPGAVAAPTAGLHFDDAMLDALKAKGVNIAFVTLHVGAGTFQPVRVDTILEHKMHSEWANVPQDVVDLIAQTKAAGKRVVAVGTTSVRSLESAARASQGELKAFSGDTDIFIYPGYQFQVVDAMVTNFHLPESTLIMLVSAFAGFDHVMAAYQHAIAQKYRFFSYGDAMFVTKKAH.

It belongs to the QueA family. As to quaternary structure, monomer.

The protein resides in the cytoplasm. The enzyme catalyses 7-aminomethyl-7-carbaguanosine(34) in tRNA + S-adenosyl-L-methionine = epoxyqueuosine(34) in tRNA + adenine + L-methionine + 2 H(+). The protein operates within tRNA modification; tRNA-queuosine biosynthesis. Functionally, transfers and isomerizes the ribose moiety from AdoMet to the 7-aminomethyl group of 7-deazaguanine (preQ1-tRNA) to give epoxyqueuosine (oQ-tRNA). The polypeptide is S-adenosylmethionine:tRNA ribosyltransferase-isomerase (Shewanella baltica (strain OS185)).